The chain runs to 229 residues: Large ribosomal subunit protein uL1 (229 aa).

This sequence belongs to the universal ribosomal protein uL1 family. In terms of assembly, part of the 50S ribosomal subunit.

Functionally, binds directly to 23S rRNA. The L1 stalk is quite mobile in the ribosome, and is involved in E site tRNA release. In terms of biological role, protein L1 is also a translational repressor protein, it controls the translation of the L11 operon by binding to its mRNA. This chain is Large ribosomal subunit protein uL1, found in Clostridium kluyveri (strain ATCC 8527 / DSM 555 / NBRC 12016 / NCIMB 10680 / K1).